The chain runs to 316 residues: HTH-type transcriptional regulator cbl (316 aa).

The 59-residue stretch at 1 to 59 (MNFQQLKIIREAARQDYNLTEVANMLFTSQSGVSRHIRELEDELGIEIFVRRGKRLLGM) folds into the HTH lysR-type domain. A DNA-binding region (H-T-H motif) is located at residues 19–38 (LTEVANMLFTSQSGVSRHIR).

It belongs to the LysR transcriptional regulatory family.

Its function is as follows. May be an accessory regulatory protein within the cys regulon. In Escherichia coli (strain K12), this protein is HTH-type transcriptional regulator cbl (cbl).